The sequence spans 309 residues: Mycothiol acetyltransferase (309 aa).

N-acetyltransferase domains follow at residues 16–158 (ETLA…LDLP) and 166–309 (VSVR…RTET). Residue Glu47 participates in 1D-myo-inositol 2-(L-cysteinylamino)-2-deoxy-alpha-D-glucopyranoside binding. 92 to 94 (LVV) is a binding site for acetyl-CoA. 1D-myo-inositol 2-(L-cysteinylamino)-2-deoxy-alpha-D-glucopyranoside-binding residues include Glu193, Lys232, and Glu241. Acetyl-CoA is bound by residues 245–247 (LGI) and 252–258 (QGGGLGK). Tyr279 serves as a coordination point for 1D-myo-inositol 2-(L-cysteinylamino)-2-deoxy-alpha-D-glucopyranoside.

The protein belongs to the acetyltransferase family. MshD subfamily. In terms of assembly, monomer.

The catalysed reaction is 1D-myo-inositol 2-(L-cysteinylamino)-2-deoxy-alpha-D-glucopyranoside + acetyl-CoA = mycothiol + CoA + H(+). In terms of biological role, catalyzes the transfer of acetyl from acetyl-CoA to desacetylmycothiol (Cys-GlcN-Ins) to form mycothiol. The protein is Mycothiol acetyltransferase of Streptomyces coelicolor (strain ATCC BAA-471 / A3(2) / M145).